A 364-amino-acid polypeptide reads, in one-letter code: Chorismate synthase (364 aa).

Arginine 47 contacts NADP(+). FMN is bound by residues 124–126, glycine 287, 302–306, and arginine 328; these read RAS and KPTAT.

Belongs to the chorismate synthase family. In terms of assembly, homotetramer. FMNH2 is required as a cofactor.

The enzyme catalyses 5-O-(1-carboxyvinyl)-3-phosphoshikimate = chorismate + phosphate. The protein operates within metabolic intermediate biosynthesis; chorismate biosynthesis; chorismate from D-erythrose 4-phosphate and phosphoenolpyruvate: step 7/7. Its function is as follows. Catalyzes the anti-1,4-elimination of the C-3 phosphate and the C-6 proR hydrogen from 5-enolpyruvylshikimate-3-phosphate (EPSP) to yield chorismate, which is the branch point compound that serves as the starting substrate for the three terminal pathways of aromatic amino acid biosynthesis. This reaction introduces a second double bond into the aromatic ring system. The sequence is that of Chorismate synthase from Prochlorococcus marinus (strain MIT 9515).